We begin with the raw amino-acid sequence, 349 residues long: UDP-galactose/UDP-glucose transporter 4 (349 aa).

8 helical membrane passes run 23-43, 56-76, 115-135, 140-160, 167-187, 205-225, 248-268, and 293-313; these read WQQFLICSSGFFFGYLVNGIC, GWYFTFAQGLVYIALIYMYGF, IMFKSTKVLPVMVMGAFIPGL, PVHEYISAMLLVIGLILFTLA, NFSIIGVMMISGALIMDAFLG, MLFCSTVVGLPFLLAPMILTG, AMATFIGQVSVLSLIALFGAA, and LTEQHGTGLLLIFMGIILKMV. A disordered region spans residues 316 to 349; sequence PNPNPKSSGSGQTPGKLERVKFEKEDDEESRPLV. A compositionally biased stretch (acidic residues) spans 340 to 349; it reads EDDEESRPLV.

It belongs to the nucleotide-sugar transporter family. UDP-galactose:UMP antiporter (TC 2.A.7.11) subfamily.

It localises to the membrane. Its function is as follows. Sugar transporter involved in the transport of nucleotide-sugars from cytoplasm into the Golgi and/or the endoplasmic reticulum. This Arabidopsis thaliana (Mouse-ear cress) protein is UDP-galactose/UDP-glucose transporter 4.